The primary structure comprises 439 residues: 3-phosphoshikimate 1-carboxyvinyltransferase (439 aa).

The 3-phosphoshikimate site is built by K29, S30, and R34. K29 serves as a coordination point for phosphoenolpyruvate. Residues G100 and R128 each contribute to the phosphoenolpyruvate site. Residues S173, S174, Q175, S201, D321, and K348 each contribute to the 3-phosphoshikimate site. Q175 contacts phosphoenolpyruvate. Residue D321 is the Proton acceptor of the active site. The phosphoenolpyruvate site is built by R352 and R395.

The protein belongs to the EPSP synthase family. Monomer.

It localises to the cytoplasm. The catalysed reaction is 3-phosphoshikimate + phosphoenolpyruvate = 5-O-(1-carboxyvinyl)-3-phosphoshikimate + phosphate. Its pathway is metabolic intermediate biosynthesis; chorismate biosynthesis. Functionally, catalyzes the transfer of the enolpyruvyl moiety of phosphoenolpyruvate (PEP) to the 5-hydroxyl of shikimate-3-phosphate (S3P) to produce enolpyruvyl shikimate-3-phosphate and inorganic phosphate. In Halobacterium salinarum (strain ATCC 700922 / JCM 11081 / NRC-1) (Halobacterium halobium), this protein is 3-phosphoshikimate 1-carboxyvinyltransferase.